The sequence spans 177 residues: Large ribosomal subunit protein uL6 (177 aa).

Belongs to the universal ribosomal protein uL6 family. Part of the 50S ribosomal subunit.

This protein binds to the 23S rRNA, and is important in its secondary structure. It is located near the subunit interface in the base of the L7/L12 stalk, and near the tRNA binding site of the peptidyltransferase center. The chain is Large ribosomal subunit protein uL6 from Rhizobium meliloti (strain 1021) (Ensifer meliloti).